We begin with the raw amino-acid sequence, 321 residues long: Gap junction delta-2 protein (321 aa).

The Cytoplasmic portion of the chain corresponds to 1–19 (MGEWTILERLLEAAVQQHS). The helical transmembrane segment at 20–42 (TMIGRILLTVVVIFRILIVAIVG) threads the bilayer. The Extracellular segment spans residues 43 to 75 (ETVYDDEQTMFVCNTLQPGCNQACYDRAFPISH). The helical transmembrane segment at 76 to 98 (IRYWVFQIIMVCTPSLCFITYSV) threads the bilayer. Residues 99–197 (HQSAKQRERR…KLRRQEGISR (99 aa)) lie on the Cytoplasmic side of the membrane. The tract at residues 120-141 (PAESIGGPGGTGGGGSGGSKRE) is disordered. Over residues 125 to 137 (GGPGGTGGGGSGG) the composition is skewed to gly residues. A helical membrane pass occupies residues 198–220 (FYIIQVVFRNALEIGFLVGQYFL). Over 221–252 (YGFSVPGLYECNRYPCIKEVECYVSRPTEKTV) the chain is Extracellular. The helical transmembrane segment at 253–275 (FLVFMFAVSGICVVLNLAELNHL) threads the bilayer. Topologically, residues 276–321 (GWRKIKLAVRGAQAKRKSVYEIRNKDLPRVSVPNFGRTQSSDSAYV) are cytoplasmic.

Belongs to the connexin family. Delta-type subfamily. A connexon is composed of a hexamer of connexins. As to expression, highly expressed in neurons.

The protein localises to the cell membrane. It is found in the cell junction. Its subcellular location is the gap junction. One gap junction consists of a cluster of closely packed pairs of transmembrane channels, the connexons, through which materials of low MW diffuse from one cell to a neighboring cell. The chain is Gap junction delta-2 protein (Gjd2) from Rattus norvegicus (Rat).